The sequence spans 165 residues: Transcription elongation factor GreA (165 aa).

The stretch at 55–78 forms a coiled coil; it reads AAKEEQGKQELRVRQLTQLLENAK.

The protein belongs to the GreA/GreB family.

Necessary for efficient RNA polymerase transcription elongation past template-encoded arresting sites. The arresting sites in DNA have the property of trapping a certain fraction of elongating RNA polymerases that pass through, resulting in locked ternary complexes. Cleavage of the nascent transcript by cleavage factors such as GreA or GreB allows the resumption of elongation from the new 3'terminus. GreA releases sequences of 2 to 3 nucleotides. The sequence is that of Transcription elongation factor GreA from Streptomyces avermitilis (strain ATCC 31267 / DSM 46492 / JCM 5070 / NBRC 14893 / NCIMB 12804 / NRRL 8165 / MA-4680).